The primary structure comprises 252 residues: tRNA pseudouridine synthase A (252 aa).

Catalysis depends on D52, which acts as the Nucleophile. Y111 is a binding site for substrate.

It belongs to the tRNA pseudouridine synthase TruA family. Homodimer.

It catalyses the reaction uridine(38/39/40) in tRNA = pseudouridine(38/39/40) in tRNA. Formation of pseudouridine at positions 38, 39 and 40 in the anticodon stem and loop of transfer RNAs. The chain is tRNA pseudouridine synthase A from Parabacteroides distasonis (strain ATCC 8503 / DSM 20701 / CIP 104284 / JCM 5825 / NCTC 11152).